A 433-amino-acid chain; its full sequence is D-amino acid dehydrogenase (433 aa).

An FAD-binding site is contributed by 3-17 (VLVLGSGVIGTTSAY).

This sequence belongs to the DadA oxidoreductase family. FAD serves as cofactor.

The catalysed reaction is a D-alpha-amino acid + A + H2O = a 2-oxocarboxylate + AH2 + NH4(+). The protein operates within amino-acid degradation; D-alanine degradation; NH(3) and pyruvate from D-alanine: step 1/1. In terms of biological role, oxidative deamination of D-amino acids. This chain is D-amino acid dehydrogenase, found in Pseudomonas syringae pv. syringae (strain B728a).